The sequence spans 134 residues: Small ribosomal subunit protein uS8 (134 aa).

It belongs to the universal ribosomal protein uS8 family. In terms of assembly, part of the 30S ribosomal subunit. Contacts proteins S5 and S12.

In terms of biological role, one of the primary rRNA binding proteins, it binds directly to 16S rRNA central domain where it helps coordinate assembly of the platform of the 30S subunit. This chain is Small ribosomal subunit protein uS8, found in Fervidobacterium nodosum (strain ATCC 35602 / DSM 5306 / Rt17-B1).